Here is a 354-residue protein sequence, read N- to C-terminus: Uroporphyrinogen decarboxylase (354 aa).

Residues 25-29, Asp75, Tyr152, Thr207, and His330 contribute to the substrate site; that span reads RQAGR.

Belongs to the uroporphyrinogen decarboxylase family. In terms of assembly, homodimer.

The protein localises to the cytoplasm. The enzyme catalyses uroporphyrinogen III + 4 H(+) = coproporphyrinogen III + 4 CO2. The protein operates within porphyrin-containing compound metabolism; protoporphyrin-IX biosynthesis; coproporphyrinogen-III from 5-aminolevulinate: step 4/4. Its function is as follows. Catalyzes the decarboxylation of four acetate groups of uroporphyrinogen-III to yield coproporphyrinogen-III. The protein is Uroporphyrinogen decarboxylase of Xanthomonas euvesicatoria pv. vesicatoria (strain 85-10) (Xanthomonas campestris pv. vesicatoria).